A 364-amino-acid chain; its full sequence is Protein-glutamate methylesterase/protein-glutamine glutaminase (364 aa).

One can recognise a Response regulatory domain in the interval 5-123; that stretch reads RVLVVDDTIL…PAANKAALAN (119 aa). At Asp-56 the chain carries 4-aspartylphosphate. The CheB-type methylesterase domain occupies 174–364; that stretch reads EIVVIGISTG…QEIVHTVKLY (191 aa). Catalysis depends on residues Ser-181, His-208, and Asp-306.

The protein belongs to the CheB family. Phosphorylated by CheA. Phosphorylation of the N-terminal regulatory domain activates the methylesterase activity.

It localises to the cytoplasm. The catalysed reaction is [protein]-L-glutamate 5-O-methyl ester + H2O = L-glutamyl-[protein] + methanol + H(+). It carries out the reaction L-glutaminyl-[protein] + H2O = L-glutamyl-[protein] + NH4(+). Involved in chemotaxis. Part of a chemotaxis signal transduction system that modulates chemotaxis in response to various stimuli. Catalyzes the demethylation of specific methylglutamate residues introduced into the chemoreceptors (methyl-accepting chemotaxis proteins or MCP) by CheR. Also mediates the irreversible deamidation of specific glutamine residues to glutamic acid. The polypeptide is Protein-glutamate methylesterase/protein-glutamine glutaminase (Desulfotalea psychrophila (strain LSv54 / DSM 12343)).